We begin with the raw amino-acid sequence, 315 residues long: Annexin Gh1 (315 aa).

Annexin repeat units lie at residues 10–81, 82–153, 165–236, and 240–311; these read PSVS…LWAL, DPAE…PLVS, TLAK…STVK, and YPEK…VLAG. F23, G25, G27, and E67 together coordinate Ca(2+). Residues I253, R255, G257, V295, D297, T298, and E303 each contribute to the Ca(2+) site.

This sequence belongs to the annexin family. As to quaternary structure, monomer. Trimer. Oligomerization is calcium-independent. Disassembly of the oligomers seems to be required for calcium-binding.

The protein localises to the membrane. Functionally, binds to phospholipid vesicles in a calcium-dependent manner in vitro. Prefers phosphatidyl-serine containing membranes. May have a role in the membrane cytoskeleton scaffolding or exocytotic processes. May be involved in oxidative stress response. In Gossypium hirsutum (Upland cotton), this protein is Annexin Gh1.